The primary structure comprises 392 residues: Na(+)/H(+) antiporter NhaA (392 aa).

11 helical membrane passes run Ile-16–Ala-36, Leu-58–Val-78, Ile-93–Leu-113, Gly-124–Gly-144, Ile-153–Phe-173, Thr-176–Met-196, Met-199–Leu-219, Asp-257–Val-277, Val-295–Ile-315, Trp-328–Val-348, and Ala-362–Leu-382.

Belongs to the NhaA Na(+)/H(+) (TC 2.A.33) antiporter family.

It is found in the cell inner membrane. It carries out the reaction Na(+)(in) + 2 H(+)(out) = Na(+)(out) + 2 H(+)(in). Functionally, na(+)/H(+) antiporter that extrudes sodium in exchange for external protons. This is Na(+)/H(+) antiporter NhaA from Sulfurovum sp. (strain NBC37-1).